The following is a 71-amino-acid chain: Pro-MCH (71 aa).

The N-terminal stretch at 1-20 is a signal peptide; sequence AKMSLSSYILILTLVLFSQG.

Belongs to the melanin-concentrating hormone family.

The protein localises to the secreted. The protein is Pro-MCH (PMCH) of Carlito syrichta (Philippine tarsier).